The sequence spans 146 residues: Leghemoglobin (146 aa).

The 144-residue stretch at 3–146 folds into the Globin domain; sequence AFTEKQEALV…FAAGIKKAYA (144 aa). 2 positions are modified to nitrated tyrosine: Tyr26 and Tyr31. Heme b is bound at residue Ser46. Residue Ser46 is modified to Phosphoserine. His62 contributes to the O2 binding site. His93 and Lys96 together coordinate heme b. At Tyr134 the chain carries Nitrated tyrosine.

It belongs to the plant globin family. In terms of assembly, monomer. In terms of processing, nitrated mainly at Tyr-31 and, to a lower extent, at Tyr-26 and Tyr-134, in effective nodules and particularly in hypoxic conditions; this mechanism may play a protective role in the symbiosis by buffering toxic peroxynitrite NO(2)(-). Nitration level decrease during nodule senescence. Post-translationally, phosphorylation at Ser-46 disrupts the molecular environment of its porphyrin ring oxygen binding pocket, thus leading to a reduced oxygen consumption and to the delivery of oxygen O(2) to symbiosomes. In terms of tissue distribution, root nodules.

It localises to the cytoplasm. It is found in the cytosol. The protein resides in the nucleus. Leghemoglobin that reversibly binds oxygen O(2) through a pentacoordinated heme iron. In root nodules, facilitates the diffusion of oxygen to the bacteroids while preventing the bacterial nitrogenase from being inactivated by buffering dioxygen, nitric oxide and carbon monoxide, and promoting the formation of reactive oxygen species (ROS, e.g. H(2)O(2)). This role is essential for symbiotic nitrogen fixation (SNF). The chain is Leghemoglobin from Phaseolus vulgaris (Kidney bean).